The sequence spans 80 residues: Large ribosomal subunit protein bL31B (80 aa).

It belongs to the bacterial ribosomal protein bL31 family. Type B subfamily. As to quaternary structure, part of the 50S ribosomal subunit.

The sequence is that of Large ribosomal subunit protein bL31B from Streptococcus thermophilus (strain CNRZ 1066).